A 469-amino-acid chain; its full sequence is Acetyl-CoA decarbonylase/synthase complex subunit beta 1 (469 aa).

4 residues coordinate [Ni-Fe-S] cluster: Cys189, Cys192, Cys278, and Cys280.

Belongs to the CdhC family. In terms of assembly, monomer. The ACDS complex is made up of alpha, epsilon, beta, gamma and delta chains with a probable stoichiometry of (alpha(2)epsilon(2))(4)-beta(8)-(gamma(1)delta(1))(8) (Potential). [Ni-Fe-S] cluster is required as a cofactor.

The catalysed reaction is Co(I)-[corrinoid Fe-S protein] + acetyl-CoA + H(+) = methyl-Co(III)-[corrinoid Fe-S protein] + CO + CoA. Its pathway is one-carbon metabolism; methanogenesis from acetate. Its function is as follows. Part of a complex that catalyzes the reversible cleavage of acetyl-CoA, allowing growth on acetate as sole source of carbon and energy. The alpha-epsilon complex generates CO from CO(2), while the beta subunit (this protein) combines the CO with CoA and a methyl group to form acetyl-CoA. The methyl group, which is incorporated into acetyl-CoA, is transferred to the beta subunit by a corrinoid iron-sulfur protein (the gamma-delta complex). In Methanosarcina mazei (strain ATCC BAA-159 / DSM 3647 / Goe1 / Go1 / JCM 11833 / OCM 88) (Methanosarcina frisia), this protein is Acetyl-CoA decarbonylase/synthase complex subunit beta 1 (cdhC1).